Here is a 496-residue protein sequence, read N- to C-terminus: Probable cytosol aminopeptidase (496 aa).

2 residues coordinate Mn(2+): Lys-266 and Asp-271. Lys-278 is a catalytic residue. Mn(2+) contacts are provided by Asp-290, Asp-349, and Glu-351. Residue Arg-353 is part of the active site.

The protein belongs to the peptidase M17 family. Requires Mn(2+) as cofactor.

The protein resides in the cytoplasm. It carries out the reaction Release of an N-terminal amino acid, Xaa-|-Yaa-, in which Xaa is preferably Leu, but may be other amino acids including Pro although not Arg or Lys, and Yaa may be Pro. Amino acid amides and methyl esters are also readily hydrolyzed, but rates on arylamides are exceedingly low.. The enzyme catalyses Release of an N-terminal amino acid, preferentially leucine, but not glutamic or aspartic acids.. Presumably involved in the processing and regular turnover of intracellular proteins. Catalyzes the removal of unsubstituted N-terminal amino acids from various peptides. This Trichodesmium erythraeum (strain IMS101) protein is Probable cytosol aminopeptidase.